Reading from the N-terminus, the 128-residue chain is MSIEVGSKLQGKITGITNFGAFVELPGGSTGLVHISEVADNYVKDINDHLKVGDQVEVKVINVEKDGKIGLSIKKAKDRPQARPRNDFRPKESFEQKMNKFLKDSEDRLSSLKRNTESKRGGRGARRG.

Positions 6-74 (GSKLQGKITG…KDGKIGLSIK (69 aa)) constitute an S1 motif domain. Positions 72 to 128 (SIKKAKDRPQARPRNDFRPKESFEQKMNKFLKDSEDRLSSLKRNTESKRGGRGARRG) are disordered. The segment covering 78-120 (DRPQARPRNDFRPKESFEQKMNKFLKDSEDRLSSLKRNTESKR) has biased composition (basic and acidic residues).

It belongs to the peptidase U57 family.

This is an uncharacterized protein from Bacillus subtilis (strain 168).